Here is a 487-residue protein sequence, read N- to C-terminus: Cyclic AMP-dependent transcription factor ATF-2 (487 aa).

A C2H2-type zinc finger spans residues 7-31; it reads FLCTAPGCGQRFTNEDHLAVHKHKH. Thr-34 is modified (phosphothreonine; by PKC/PRKCH). Ser-44 bears the Phosphoserine; by VRK1 mark. Phosphothreonine is present on residues Thr-51 and Thr-53. Thr-55 is subject to Phosphothreonine; by VRK1. Residues Ser-72 and Ser-94 each carry the phosphoserine modification. Thr-98 bears the Phosphothreonine mark. Ser-103 is subject to Phosphoserine; by PKC/PRKCA and PKC/PRKCB. Disordered stretches follow at residues 107–130 and 241–355; these read EPSV…TNDE and PGIP…RQKR. Position 118 is a phosphoserine (Ser-118). Positions 264 to 275 are enriched in polar residues; that stretch reads LTQQHPPVTNGD. The segment at 278-281 is essential for its histone acetyltransferase activity; that stretch reads KGHG. A compositionally biased stretch (low complexity) spans 300–316; the sequence is PATSTTETPASPAHTTP. Ser-310 bears the Phosphoserine mark. A Phosphoserine; by PKC/PRKCA and PKC/PRKCB modification is found at Ser-322. A compositionally biased stretch (basic and acidic residues) spans 328–345; that stretch reads AANEDPDEKRRKFLERNR. The bZIP domain occupies 334-397; it reads DEKRRKFLER…AQLKQLLLAH (64 aa). A basic motif region spans residues 336–356; the sequence is KRRKFLERNRAAASRCRQKRK. Position 339 is an N6-acetyllysine (Lys-339). Ser-349 is subject to Phosphoserine; by PKC/PRKCA and PKC/PRKCB. The residue at position 356 (Lys-356) is an N6-acetyllysine. Residues 362-390 form a leucine-zipper region; sequence LEKKAEDLSSLNGQLQSEVTLLRNEVAQL. Positions 387 to 396 match the Nuclear export signal motif; that stretch reads VAQLKQLLLA. A disordered region spans residues 407–487; sequence KKSGYHTADK…PSSQAQPSGS (81 aa). Ser-424 and Ser-428 each carry phosphoserine. Positions 425 to 436 are enriched in polar residues; the sequence is VPSSPHTEAIQH. Over residues 437-449 the composition is skewed to low complexity; it reads SSVSTSNGVSSTS. A compositionally biased stretch (polar residues) spans 457–470; the sequence is SVLTQMADQSTEPA. 2 positions are modified to phosphoserine; by ATM: Ser-472 and Ser-480. Polar residues predominate over residues 478-487; the sequence is PSSQAQPSGS.

It belongs to the bZIP family. ATF subfamily. As to quaternary structure, binds DNA as a dimer and can form a homodimer in the absence of DNA. Can form a heterodimer with JUN. Heterodimerization is essential for its transcriptional activity. Interacts with SMAD3 and SMAD4. Binds through its N-terminal region to UTF1 which acts as a coactivator of ATF2 transcriptional activity. Interacts with the HK1/VDAC1 complex. Interacts with NBN, MRE11, XPO1, KAT5 and CUL3. Post-translationally, phosphorylation of Thr-51 by MAPK14 and MAPK11, and at Thr-53 by MAPK1/ERK2, MAPK3/ERK1, MAPK11, MAPK12 and MAPK14 in response to external stimulus like insulin causes increased transcriptional activity. Phosphorylated by PLK3 following hyperosmotic stress. Also phosphorylated and activated by JNK and CaMK4. ATM-mediated phosphorylation at Ser-472 and Ser-480 stimulates its function in DNA damage response. Phosphorylation at Ser-44, Thr-55 and Ser-103 activates its transcriptional activity. Phosphorylation at Thr-51 or Thr-53 enhances acetylation of histones H2B and H4.

Its subcellular location is the nucleus. It is found in the cytoplasm. It localises to the mitochondrion outer membrane. Its function is as follows. Transcriptional activator which regulates the transcription of various genes, including those involved in anti-apoptosis, cell growth, and DNA damage response. Dependent on its binding partner, binds to CRE (cAMP response element) consensus sequences (5'-TGACGTCA-3') or to AP-1 (activator protein 1) consensus sequences (5'-TGACTCA-3'). In the nucleus, contributes to global transcription and the DNA damage response, in addition to specific transcriptional activities that are related to cell development, proliferation and death. In the cytoplasm, interacts with and perturbs HK1- and VDAC1-containing complexes at the mitochondrial outer membrane, thereby impairing mitochondrial membrane potential, inducing mitochondrial leakage and promoting cell death. The phosphorylated form (mediated by ATM) plays a role in the DNA damage response and is involved in the ionizing radiation (IR)-induced S phase checkpoint control and in the recruitment of the MRN complex into the IR-induced foci (IRIF). Exhibits histone acetyltransferase (HAT) activity which specifically acetylates histones H2B and H4 in vitro. In concert with CUL3 and RBX1, promotes the degradation of KAT5 thereby attenuating its ability to acetylate and activate ATM. Can elicit oncogenic or tumor suppressor activities depending on the tissue or cell type. This Rattus norvegicus (Rat) protein is Cyclic AMP-dependent transcription factor ATF-2 (Atf2).